We begin with the raw amino-acid sequence, 292 residues long: Homoserine kinase (292 aa).

80–90 (PLARGLGSSSS) is a binding site for ATP.

It belongs to the GHMP kinase family. Homoserine kinase subfamily.

It localises to the cytoplasm. The catalysed reaction is L-homoserine + ATP = O-phospho-L-homoserine + ADP + H(+). The protein operates within amino-acid biosynthesis; L-threonine biosynthesis; L-threonine from L-aspartate: step 4/5. Its function is as follows. Catalyzes the ATP-dependent phosphorylation of L-homoserine to L-homoserine phosphate. In Leuconostoc mesenteroides subsp. mesenteroides (strain ATCC 8293 / DSM 20343 / BCRC 11652 / CCM 1803 / JCM 6124 / NCDO 523 / NBRC 100496 / NCIMB 8023 / NCTC 12954 / NRRL B-1118 / 37Y), this protein is Homoserine kinase.